The primary structure comprises 589 residues: Aspartate--tRNA ligase (589 aa).

E175 is a binding site for L-aspartate. The tract at residues 199–202 (QIFK) is aspartate. R221 is a binding site for L-aspartate. ATP-binding positions include 221–223 (RDE) and Q230. Position 449 (H449) interacts with L-aspartate. E483 provides a ligand contact to ATP. Residue R490 coordinates L-aspartate. 535 to 538 (GLDR) serves as a coordination point for ATP.

It belongs to the class-II aminoacyl-tRNA synthetase family. Type 1 subfamily. In terms of assembly, homodimer.

Its subcellular location is the cytoplasm. It catalyses the reaction tRNA(Asp) + L-aspartate + ATP = L-aspartyl-tRNA(Asp) + AMP + diphosphate. Functionally, catalyzes the attachment of L-aspartate to tRNA(Asp) in a two-step reaction: L-aspartate is first activated by ATP to form Asp-AMP and then transferred to the acceptor end of tRNA(Asp). The polypeptide is Aspartate--tRNA ligase (Shouchella clausii (strain KSM-K16) (Alkalihalobacillus clausii)).